The sequence spans 614 residues: Ankyrin repeat domain-containing protein 55 (614 aa).

Residues 1–20 (MMRQATMDFSTPSVFDQQRG) are disordered. Residues 7–16 (MDFSTPSVFD) show a composition bias toward polar residues. 9 ANK repeats span residues 26–55 (VDLT…SILE), 60–89 (EGCT…NINM), 93–125 (YGRT…IPDK), 126–157 (NGRL…EINH), 161–190 (EGMT…DPTL), 194–223 (DFKT…GPSI), 230–260 (SGKT…NLQA), 264–293 (DDRT…DSNL), and 297–326 (NEST…TEPT). Disordered regions lie at residues 319 to 339 (QESR…PQKK), 354 to 375 (KKEE…EEDT), 454 to 476 (TSHA…SRSE), and 564 to 614 (RNNL…SDEN). Basic and acidic residues predominate over residues 354-373 (KKEEQRAHQKDPSRDRYREE). Ser475 bears the Phosphoserine mark.

This Homo sapiens (Human) protein is Ankyrin repeat domain-containing protein 55 (ANKRD55).